A 226-amino-acid chain; its full sequence is Fibrillarin-like rRNA/tRNA 2'-O-methyltransferase (226 aa).

S-adenosyl-L-methionine contacts are provided by residues 82-83, 100-101, 125-126, and 145-148; these read TT, EF, DA, and DVAQ.

This sequence belongs to the methyltransferase superfamily. Fibrillarin family. Interacts with nop5. Component of box C/D small ribonucleoprotein (sRNP) particles that contain rpl7ae, FlpA and nop5, plus a guide RNA.

Involved in pre-rRNA and tRNA processing. Utilizes the methyl donor S-adenosyl-L-methionine to catalyze the site-specific 2'-hydroxyl methylation of ribose moieties in rRNA and tRNA. Site specificity is provided by a guide RNA that base pairs with the substrate. Methylation occurs at a characteristic distance from the sequence involved in base pairing with the guide RNA. This chain is Fibrillarin-like rRNA/tRNA 2'-O-methyltransferase, found in Methanosarcina barkeri (strain Fusaro / DSM 804).